A 371-amino-acid chain; its full sequence is Protein SOMBRERO (371 aa).

The NAC domain occupies 17-166 (VPPGFRFHPT…GWVVCRVFKK (150 aa)). The DNA-binding element occupies 118-172 (IGLRKTLVFYTGRAPHGQKTEWIMHEYRLDDSENEIQEDGWVVCRVFKKKNHFRG). 2 disordered regions span residues 176-213 (EQEQ…LILH) and 316-355 (VQNH…NQRF). Residues 192–201 (NDHDHHHHID) show a composition bias toward basic and acidic residues. 2 stretches are compositionally biased toward low complexity: residues 202–213 (SNSNNHSPLILH) and 340–349 (GNNNGGSSSS).

In terms of tissue distribution, accumulates in maturing root cap cells, in both COL and LRC cells.

The protein resides in the nucleus. Its function is as follows. Transcription regulator. Together with BRN1 and BRN2, regulates cellular maturation of root cap. Represses stem cell-like divisions in the root cap daughter cells, and thus promotes daughter cell fate. Inhibits expression of its positive regulator FEZ in a feedback loop for controlled switches in cell division plane. Promotes the expression of genes involved in secondary cell walls (SCW) biosynthesis. This chain is Protein SOMBRERO (SMB), found in Arabidopsis thaliana (Mouse-ear cress).